A 478-amino-acid polypeptide reads, in one-letter code: ATP synthase subunit beta (478 aa).

151-158 is a binding site for ATP; the sequence is GGAGVGKT.

It belongs to the ATPase alpha/beta chains family. In terms of assembly, F-type ATPases have 2 components, CF(1) - the catalytic core - and CF(0) - the membrane proton channel. CF(1) has five subunits: alpha(3), beta(3), gamma(1), delta(1), epsilon(1). CF(0) has three main subunits: a(1), b(2) and c(9-12). The alpha and beta chains form an alternating ring which encloses part of the gamma chain. CF(1) is attached to CF(0) by a central stalk formed by the gamma and epsilon chains, while a peripheral stalk is formed by the delta and b chains.

It localises to the cell inner membrane. The catalysed reaction is ATP + H2O + 4 H(+)(in) = ADP + phosphate + 5 H(+)(out). Produces ATP from ADP in the presence of a proton gradient across the membrane. The catalytic sites are hosted primarily by the beta subunits. The protein is ATP synthase subunit beta of Azorhizobium caulinodans (strain ATCC 43989 / DSM 5975 / JCM 20966 / LMG 6465 / NBRC 14845 / NCIMB 13405 / ORS 571).